A 432-amino-acid chain; its full sequence is tRNA(Ile)-lysidine synthase (432 aa).

ATP is bound at residue 20-25 (SGGLDS).

Belongs to the tRNA(Ile)-lysidine synthase family.

The protein resides in the cytoplasm. It carries out the reaction cytidine(34) in tRNA(Ile2) + L-lysine + ATP = lysidine(34) in tRNA(Ile2) + AMP + diphosphate + H(+). In terms of biological role, ligates lysine onto the cytidine present at position 34 of the AUA codon-specific tRNA(Ile) that contains the anticodon CAU, in an ATP-dependent manner. Cytidine is converted to lysidine, thus changing the amino acid specificity of the tRNA from methionine to isoleucine. The protein is tRNA(Ile)-lysidine synthase of Shigella flexneri.